Consider the following 320-residue polypeptide: o-succinylbenzoate synthase (320 aa).

Residue Lys133 is the Proton donor of the active site. Positions 161, 190, and 213 each coordinate Mg(2+). Catalysis depends on Lys235, which acts as the Proton acceptor.

This sequence belongs to the mandelate racemase/muconate lactonizing enzyme family. MenC type 1 subfamily. It depends on a divalent metal cation as a cofactor.

It catalyses the reaction (1R,6R)-6-hydroxy-2-succinyl-cyclohexa-2,4-diene-1-carboxylate = 2-succinylbenzoate + H2O. It functions in the pathway quinol/quinone metabolism; 1,4-dihydroxy-2-naphthoate biosynthesis; 1,4-dihydroxy-2-naphthoate from chorismate: step 4/7. The protein operates within quinol/quinone metabolism; menaquinone biosynthesis. Converts 2-succinyl-6-hydroxy-2,4-cyclohexadiene-1-carboxylate (SHCHC) to 2-succinylbenzoate (OSB). The protein is o-succinylbenzoate synthase of Salmonella agona (strain SL483).